We begin with the raw amino-acid sequence, 455 residues long: E3 ubiquitin-protein ligase IPI1 (455 aa).

A disordered region spans residues 1 to 42 (MGAEEEEEPASAVGREGGGGGGGARAAGAGAGGDTADDDDSG). Residues 15–33 (REGGGGGGGARAAGAGAGG) are compositionally biased toward gly residues. An RING-type; atypical zinc finger spans residues 51–97 (CSICLDAVVAGGGDRSTARLQCGHEFHLDCIGSAFNAKGVMQCPNCR). Disordered regions lie at residues 286–311 (LDSDSQQRGSLPSVYGNGSGSRSRIP) and 426–455 (QWIGAGRSPPPPPPPPADNSSYRQMHIPRM). Over residues 433–442 (SPPPPPPPPA) the composition is skewed to pro residues.

In terms of assembly, interacts with SPL14/IPA1.

Its subcellular location is the nucleus. It carries out the reaction S-ubiquitinyl-[E2 ubiquitin-conjugating enzyme]-L-cysteine + [acceptor protein]-L-lysine = [E2 ubiquitin-conjugating enzyme]-L-cysteine + N(6)-ubiquitinyl-[acceptor protein]-L-lysine.. Its pathway is protein modification; protein ubiquitination. Functionally, functions as an E3 ligase that promotes polyubiquitination of SPL14/IPA1 for subsequent proteasomal degradation. Regulates plant architecture by modulating SPL14/IPA1 abundance. Promotes the degradation of SPL14/IPA1 in panicles, while it stabilizes SPL14/IPA1 in shoot apices. Ubiquitinates the SPL14/IPA1-mediated complex with 'Lys-48'-linked polyubiquitin in panicles and 'Lys-63'-linked polyubiquitin chains in the shoot apex. The sequence is that of E3 ubiquitin-protein ligase IPI1 from Oryza sativa subsp. japonica (Rice).